The primary structure comprises 253 residues: Phosphoadenosine 5'-phosphosulfate reductase (253 aa).

Catalysis depends on C242, which acts as the Nucleophile; cysteine thiosulfonate intermediate.

This sequence belongs to the PAPS reductase family. CysH subfamily.

It localises to the cytoplasm. It carries out the reaction [thioredoxin]-disulfide + sulfite + adenosine 3',5'-bisphosphate + 2 H(+) = [thioredoxin]-dithiol + 3'-phosphoadenylyl sulfate. It participates in sulfur metabolism; hydrogen sulfide biosynthesis; sulfite from sulfate: step 3/3. Its function is as follows. Catalyzes the formation of sulfite from phosphoadenosine 5'-phosphosulfate (PAPS) using thioredoxin as an electron donor. The polypeptide is Phosphoadenosine 5'-phosphosulfate reductase (Vibrio cholerae serotype O1 (strain ATCC 39541 / Classical Ogawa 395 / O395)).